We begin with the raw amino-acid sequence, 245 residues long: tRNA1(Val) (adenine(37)-N6)-methyltransferase (245 aa).

Belongs to the methyltransferase superfamily. tRNA (adenine-N(6)-)-methyltransferase family.

Its subcellular location is the cytoplasm. It carries out the reaction adenosine(37) in tRNA1(Val) + S-adenosyl-L-methionine = N(6)-methyladenosine(37) in tRNA1(Val) + S-adenosyl-L-homocysteine + H(+). Specifically methylates the adenine in position 37 of tRNA(1)(Val) (anticodon cmo5UAC). The polypeptide is tRNA1(Val) (adenine(37)-N6)-methyltransferase (Escherichia coli (strain UTI89 / UPEC)).